Here is a 151-residue protein sequence, read N- to C-terminus: Deoxyuridine 5'-triphosphate nucleotidohydrolase (151 aa).

Substrate-binding positions include 70–72, Asn83, 87–89, and Met97; these read RSG and LID.

The protein belongs to the dUTPase family. Requires Mg(2+) as cofactor.

It carries out the reaction dUTP + H2O = dUMP + diphosphate + H(+). It functions in the pathway pyrimidine metabolism; dUMP biosynthesis; dUMP from dCTP (dUTP route): step 2/2. In terms of biological role, this enzyme is involved in nucleotide metabolism: it produces dUMP, the immediate precursor of thymidine nucleotides and it decreases the intracellular concentration of dUTP so that uracil cannot be incorporated into DNA. The sequence is that of Deoxyuridine 5'-triphosphate nucleotidohydrolase from Shigella flexneri serotype 5b (strain 8401).